A 736-amino-acid polypeptide reads, in one-letter code: Gephyrin (736 aa).

An MPT Mo-transferase region spans residues 14–153; it reads QIRVGVLTVS…LPGSKKGSQE (140 aa). Disordered regions lie at residues 181–232 and 260–290; these read DELE…DSSS and TASLSTTPSESPRAQATSRLSTASCPTPKVQ. A compositionally biased stretch (pro residues) spans 187 to 199; sequence PSPPPPLSPPPTT. Over residues 261-290 the composition is skewed to polar residues; sequence ASLSTTPSESPRAQATSRLSTASCPTPKVQ. The tract at residues 294–736 is MPT adenylyltransferase; that stretch reads SSKENILRAS…VVDVMVIGRL (443 aa).

It in the N-terminal section; belongs to the MoaB/Mog family. In the C-terminal section; belongs to the MoeA family. In terms of assembly, homotrimer, homodimer and homooligomer. Interacts with glycine receptors. Mg(2+) is required as a cofactor.

The protein resides in the postsynaptic cell membrane. It is found in the cell membrane. The protein localises to the cytoplasm. Its subcellular location is the cytosol. It localises to the cytoskeleton. The protein resides in the cell projection. It is found in the dendrite. The protein localises to the postsynaptic density. The enzyme catalyses molybdopterin + ATP + H(+) = adenylyl-molybdopterin + diphosphate. The catalysed reaction is adenylyl-molybdopterin + molybdate = Mo-molybdopterin + AMP + H(+). It participates in cofactor biosynthesis; molybdopterin biosynthesis. Its function is as follows. Microtubule-associated protein involved in membrane protein-cytoskeleton interactions. It is thought to anchor the inhibitory glycine receptor (GLYR) to subsynaptic microtubules. Acts as a major instructive molecule at inhibitory synapses, where it also clusters GABA type A receptors. In terms of biological role, also has a catalytic activity and catalyzes two steps in the biosynthesis of the molybdenum cofactor. In the first step, molybdopterin is adenylated. Subsequently, molybdate is inserted into adenylated molybdopterin and AMP is released. This is Gephyrin (GPHN) from Gallus gallus (Chicken).